The primary structure comprises 566 residues: Liver carboxylesterase (566 aa).

Residues 1–18 form the signal peptide; it reads MWLLPLVLTSLASSATWA. A glycan (N-linked (GlcNAc...) asparagine) is linked at Asn-80. A disulfide bridge links Cys-88 with Cys-117. The Acyl-ester intermediate role is filled by Ser-222. The cysteines at positions 274 and 285 are disulfide-linked. Glu-354 functions as the Charge relay system in the catalytic mechanism. Ser-379 carries the phosphoserine modification. His-467 functions as the Charge relay system in the catalytic mechanism. Residues 563 to 566 carry the Prevents secretion from ER motif; that stretch reads HAEL.

Belongs to the type-B carboxylesterase/lipase family.

It localises to the endoplasmic reticulum lumen. It carries out the reaction a carboxylic ester + H2O = an alcohol + a carboxylate + H(+). With respect to regulation, activated by CHAPS at concentrations of up to 130 mM, higher concentrations reduce activity. In the presence of CHAPS, activity is stimulated by non-ionic detergents. Inhibited by the esterase inhibitors diisopropylfluorophosphate and phenylmethylsulfonyl fluoride. In terms of biological role, involved in the detoxification of xenobiotics and in the activation of ester and amide prodrugs. Active towards triacylglycerides containing short-chain fatty acids from C2 to C6, and 1(3)-monoacylglycerols containing fatty acids from C2 to C12. Inactive on long-chain triacylglycerols and diacylglycerol. Hydrolyzes aromatic and alkyl esters and vitamin A acetate. The hydrolysis rate depends upon the amino acid promoiety and the esterification site of the prodrug. Aromatic promoieties are favored, highest rates are observed with phenylalanyl progdrugs, hydrolysis of valyl and isoleucyl prodrugs is less efficient. With floxuridine prodrugs, activity is higher on 5' monoesters than on 3' monoesters. With gemcitabine prodrugs, activity is higher on 3' monoesters than on 5' monoesters. The protein is Liver carboxylesterase of Sus scrofa (Pig).